We begin with the raw amino-acid sequence, 1845 residues long: MAAAAASASQDELNQLERVFLRLGHAETDEQLQNIISKFLPPVLLKLSSTQEGVRKKVMELLVHLNKRIKSRPKIQLPVETLLVQYQDPAAVSFVTNFTIIYVKMGYPRLPVEKQCELAPTLLTAMEGKPQPQQDSLMHLLIPTLFHMKYPVESSKSASPFNLAEKPKTVQLLLDFMLDVLLMPYGYVLNESQSRQNSSSAQGSSSNSGGGSGIPQPPPGMSFYAAKRVIGDNPWTPEQLEQCKLGIVKFIEAEQVPELEAVLHLVIASSDTRHSVATAADLELKSKQSLIDWNNPAIINKMYKVYLGDIPLKTKEGAVLKPELKRDPVSTRVKLKIVPHLLRSRQAAETFPANIQVVYDGLFGTNTNSKLRTLSLQFVHHICITCPEIKIKPLGPMLLNGLTKLINEYKEDPKLLSMAYSAVGKLSSRMPHLFTKDIALVQQLFEALCKEEPETRLAIQEALSMMVGAYSTLEGAQRTLMEALVASYLIKPEVQVRQVAVKFASTVFPSDHIPSRYLLLLAAGDPREEVHGEAQRVLRCLPGRNRKESTSEQMPSFPEMVYYIQEKASHRMKTPVKYMTGTTVLPFNPAAFGEIVLYLRMCLAHSAGVVPTSQSLADMQDHAPAIGRYIRTLMSSGQMAPSSSNKSGETNPVQIYIGLLQQLLAGVGGLPVMYCLLEAVSVYPEKLATKFVDKTEWIKSLMNNSKEEMRELAALFYSVVVSTVSGNELKSMIEQLIKTTKDNHSPEIQHGSLLALGFTVGRYLAKKKMRMSEQQDLERNADTLPDQEELIQSATETIGSFLDSTSPLLAIAACTALGEIGRNGPLPIPSEGSGFTKLHLVESLLSRIPSSKETNKMKERAIQTLGYFPVGDGDFPHQKLLLQGLMDSVEAKQIELQFTIGEAITSAAIGTSSVAARDAWQMTEEEYTPPAGAKVNDVVPWVLDVILNKHIISPNPHVRQAACIWLLSLVRKLSTHKEVKSHLKEIQSAFVSVLSENDELSQDVASKGLGLVYELGNEQDQQELVSTLVETLMTGKRVKHEVSGETVVFQGGALGKTPDGQGLSTYKELCSLASDLSQPDLVYKFMNLANHHAMWNSRKGAAFGFNVIATRAGEQLAPFLPQLVPRLYRYQFDPNLGIRQAMTSIWNALVTDKSMVDKYLKEILQDLVKNLTSNMWRVRESSCLALNDLLRGRPLDDIIDKLPEIWETLFRVQDDIKESVRKAAELALKTLSKVCVKMCDPAKGAAGQRTIAALLPCLLDKGMMSTVTEVRALSINTLVKISKSAGAMLKPHAPKLIPALLESLSVLEPQVLNYLSLRATEQEKAAMDSARLSAAKSSPMMETINMCLQYLDVSVLGELVPRLCELIRSGVGLGTKGGCASVIVSLTTQCPQDLTPYSGKLMSALLSGLTDRNSVIQKSCAFAMGHLVRTSRDSSTEKLLQKLNGWYMEKEEPIYKTSCALTIHAIGRYSPDVLKNHAKEVLPLAFLGMHEIADEEKSEKEECNLWTEVWQENVPGSFGGIRLYLQELITITQKALQSQSWKMKAQGAIAMASIAKQTSSLVPPYLGMILTALLQGLAGRTWAGKEELLKAIACVVTACSAELEKSVPNQPSTNEILQAVLKECSKENVKYKIVAISCAADILKATKEDRFQEFSNIVIPLIKKNSLESSGVRTTKNEEENEKEKELQLEYLLGAFESLGKAWPRNAETQRCYRQELCKLMCERLKLSTWKVQLGVLQSMNAFFQGLMLLEEEHADPEALAEILLETCKSITYSLENKTYSSVRTEALSVIELLLKKLEESKQWECLTSECRVLLIESLATMEPDSRPELQEKAALLKKTLENLE.

A2 carries the N-acetylalanine modification. 27 HEAT repeats span residues 28-65, 107-144, 162-205, 326-362, 387-426, 429-466, 469-507, 683-720, 721-759, 783-820, 829-868, 870-907, 931-969, 975-1012, 1013-1050, 1112-1149, 1152-1189, 1194-1231, 1243-1281, 1285-1323, 1348-1386, 1390-1427, 1517-1554, 1558-1595, 1605-1642, 1646-1683, and 1779-1822; these read TDEQ…LVHL, YPRL…LIPT, NLAE…QGSS, RDPV…YDGL, PEIK…VGKL, RMPH…LSMM, AYST…ASTV, YPEK…YSVV, VSTV…LGFT, TLPD…LGEI, PSEG…LGYF, VGDG…ITSA, AGAK…LLSL, THKE…LGLV, YELG…VVFQ, AGEQ…WNAL, DKSM…LNDL, PLDD…LKTL, KGAA…LVKI, AGAM…TEQE, LQYL…IVSL, CPQD…MGHL, SFGG…MASI, TSSL…IACV, KSVP…AADI, TKED…ENEK, and TYSS…LATM. The span at 193-207 shows a compositional bias: low complexity; it reads QSRQNSSSAQGSSSN. The disordered stretch occupies residues 193-217; it reads QSRQNSSSAQGSSSNSGGGSGIPQP. At S830 the chain carries Phosphoserine. T836 bears the Phosphothreonine mark. K1039 participates in a covalent cross-link: Glycyl lysine isopeptide (Lys-Gly) (interchain with G-Cter in SUMO1).

The protein belongs to the ECM29 family. Non-stoichiometric component of the proteasome; associates with the 26S proteasome. Interacts (via N-terminus) with VPS11, VPS26A, VPS36, RAB11FIP4 and RABEP1. Interacts (via C-terminus) with DCTN1, DCTN2, KIF5B, MYH7, MYH10, MYO10 and ARF6.

The protein localises to the endoplasmic reticulum. It localises to the endoplasmic reticulum-Golgi intermediate compartment. Its subcellular location is the endosome. It is found in the cytoplasm. The protein resides in the cytoskeleton. The protein localises to the microtubule organizing center. It localises to the centrosome. Its subcellular location is the nucleus. It is found in the multivesicular body. The protein resides in the cytoplasmic vesicle. Adapter/scaffolding protein that binds to the 26S proteasome, motor proteins and other compartment specific proteins. May couple the proteasome to different compartments including endosome, endoplasmic reticulum and centrosome. May play a role in ERAD and other enhanced proteolysis. Promotes proteasome dissociation under oxidative stress. This is Proteasome adapter and scaffold protein ECM29 from Homo sapiens (Human).